The following is a 91-amino-acid chain: Small ribosomal subunit protein uS19 (91 aa).

The protein belongs to the universal ribosomal protein uS19 family.

In terms of biological role, protein S19 forms a complex with S13 that binds strongly to the 16S ribosomal RNA. The polypeptide is Small ribosomal subunit protein uS19 (Parasynechococcus marenigrum (strain WH8102)).